Reading from the N-terminus, the 299-residue chain is Transcription termination/antitermination protein NusG (299 aa).

A disordered region spans residues D30 to D96. Repeat copies occupy residues E46–A49 and E70–A73. Positions E46 to A87 are 4 X 4 AA repeats of E-E-A-A. A compositionally biased stretch (acidic residues) spans S54–A87. The stretch at E80 to A83 is one 3; approximate repeat. Copy 4 of the repeat occupies E84–A87. The KOW domain maps to V248–V276.

This sequence belongs to the NusG family. In terms of processing, the N-terminus is blocked.

In terms of biological role, participates in transcription elongation, termination and antitermination. The polypeptide is Transcription termination/antitermination protein NusG (Streptomyces virginiae (Streptomyces cinnamonensis)).